We begin with the raw amino-acid sequence, 227 residues long: PKHD-type hydroxylase Veis_3084 (227 aa).

A disordered region spans residues 27-51 (DDGKDSAGTQARQAKNNQQLPRDSE). A compositionally biased stretch (polar residues) spans 33-47 (AGTQARQAKNNQQLP). One can recognise a Fe2OG dioxygenase domain in the interval 78 to 179 (RVFPPRVNRY…RMACFFWVES (102 aa)). Fe cation-binding residues include histidine 97, aspartate 99, and histidine 160. Arginine 170 contributes to the 2-oxoglutarate binding site.

Requires Fe(2+) as cofactor. The cofactor is L-ascorbate.

The protein is PKHD-type hydroxylase Veis_3084 of Verminephrobacter eiseniae (strain EF01-2).